The primary structure comprises 510 residues: DNA nucleotidylexotransferase (510 aa).

The disordered stretch occupies residues 1-22 (MDPLQAVHLGPRKKRPRQLGTP). The Nuclear localization signal motif lies at 11 to 17 (PRKKRPR). The BRCT domain occupies 27 to 124 (PYDIRFRDLV…KPVEMMGRHQ (98 aa)). Phosphoserine is present on Ser134. A mediates interaction with DNTTIP2 region spans residues 151-510 (SQYACQRRTT…DYIEPWERNA (360 aa)). Residues 258–262 (VGLKT) form an involved in DNA binding region. Residues 333 to 338 (GFRRGK) and 342 to 345 (HDVD) each bind a 2'-deoxyribonucleoside 5'-triphosphate. Mg(2+) is bound by residues Asp343, Asp345, and Asp434. 449 to 450 (GW) contributes to the a 2'-deoxyribonucleoside 5'-triphosphate binding site.

The protein belongs to the DNA polymerase type-X family. Interacts with PRP19 and DNTTIP1. Forms a ternary complex with DNTTIP2 and core histone. Released from this complex by PCNA. Interacts with TRERF1. Mg(2+) serves as cofactor. In terms of tissue distribution, isoform TDT-L: Expressed in the thymus, and, at lower levels, in the bone marrow. Detected in both cycling and noncycling pro-B and pre-B cells (at protein level). Isoform TDT-S: Expressed in both cycling and noncycling pro-B, but not pre-B, cells (at protein level). Not detected in mature peripheral or germinal center B cells.

It is found in the nucleus. The protein resides in the cytoplasm. It carries out the reaction DNA(n) + a 2'-deoxyribonucleoside 5'-triphosphate = DNA(n+1) + diphosphate. Functionally, transferase that catalyzes the nontemplated addition of nucleoside triphosphate to coding ends during V(D)J recombination (N addition). Involved in the generation of diversity in the antigen-binding region of immunoglobulin heavy and light chains and T-cell receptors during B- and T-cell development. Does not act on double-stranded DNA with blunt ends. Its function is as follows. 3'-to-5' DNA exonuclease. Involved in the generation of diversity in the antigen-binding region of immunoglobulin heavy and light chains and T-cell receptors during B- and T-cell development. Acts on single-stranded and double-stranded DNA with 3' or 5' extensions, but not on double-stranded DNA with blunt ends. Attenuates not only isoform TDT-S-catalyzed N addition, but also P (palindromic) addition in coding joins. Lacks terminal transferase activity. The chain is DNA nucleotidylexotransferase (Dntt) from Mus musculus (Mouse).